Here is a 51-residue protein sequence, read N- to C-terminus: Large ribosomal subunit protein eL39 (51 aa).

This sequence belongs to the eukaryotic ribosomal protein eL39 family.

The chain is Large ribosomal subunit protein eL39 from Picrophilus torridus (strain ATCC 700027 / DSM 9790 / JCM 10055 / NBRC 100828 / KAW 2/3).